A 322-amino-acid chain; its full sequence is Undecaprenyl-phosphate 4-deoxy-4-formamido-L-arabinose transferase (322 aa).

Residues 1 to 235 (MFEIHPVKKV…TCLTTTPLRM (235 aa)) lie on the Cytoplasmic side of the membrane. The chain crosses the membrane as a helical span at residues 236-256 (LSLLGSIIAIGGFSIAVLLVI). Topologically, residues 257 to 269 (LRLTFGPQWAAEG) are periplasmic. Residues 270–290 (VFMLFAVLFTFIGAQFIGMGL) traverse the membrane as a helical segment. Residues 291–322 (LGEYIGRIYTDVRARPRYFVQQVIRPSSKENE) lie on the Cytoplasmic side of the membrane.

This sequence belongs to the glycosyltransferase 2 family.

The protein localises to the cell inner membrane. It carries out the reaction UDP-4-deoxy-4-formamido-beta-L-arabinose + di-trans,octa-cis-undecaprenyl phosphate = 4-deoxy-4-formamido-alpha-L-arabinopyranosyl di-trans,octa-cis-undecaprenyl phosphate + UDP. Its pathway is glycolipid biosynthesis; 4-amino-4-deoxy-alpha-L-arabinose undecaprenyl phosphate biosynthesis; 4-amino-4-deoxy-alpha-L-arabinose undecaprenyl phosphate from UDP-4-deoxy-4-formamido-beta-L-arabinose and undecaprenyl phosphate: step 1/2. It functions in the pathway bacterial outer membrane biogenesis; lipopolysaccharide biosynthesis. Catalyzes the transfer of 4-deoxy-4-formamido-L-arabinose from UDP to undecaprenyl phosphate. The modified arabinose is attached to lipid A and is required for resistance to polymyxin and cationic antimicrobial peptides. The protein is Undecaprenyl-phosphate 4-deoxy-4-formamido-L-arabinose transferase of Escherichia coli O17:K52:H18 (strain UMN026 / ExPEC).